Consider the following 161-residue polypeptide: Hydrogenase expression/formation protein HoxO (161 aa).

It belongs to the HupG/HyaE family.

This chain is Hydrogenase expression/formation protein HoxO (hoxO), found in Cupriavidus necator (strain ATCC 17699 / DSM 428 / KCTC 22496 / NCIMB 10442 / H16 / Stanier 337) (Ralstonia eutropha).